The primary structure comprises 397 residues: Acetate kinase 1 (397 aa).

A Mg(2+)-binding site is contributed by N8. ATP is bound at residue K15. Substrate is bound at residue R89. The active-site Proton donor/acceptor is the D146. Residues H206–G210, D281–R283, and G329–N333 each bind ATP. Residue E382 participates in Mg(2+) binding.

This sequence belongs to the acetokinase family. As to quaternary structure, homodimer. Mg(2+) is required as a cofactor. It depends on Mn(2+) as a cofactor.

The protein localises to the cytoplasm. It catalyses the reaction acetate + ATP = acetyl phosphate + ADP. Its pathway is metabolic intermediate biosynthesis; acetyl-CoA biosynthesis; acetyl-CoA from acetate: step 1/2. Catalyzes the formation of acetyl phosphate from acetate and ATP. Can also catalyze the reverse reaction. The chain is Acetate kinase 1 from Listeria innocua serovar 6a (strain ATCC BAA-680 / CLIP 11262).